The sequence spans 88 residues: Conotoxin VxVIB (88 aa).

A signal peptide spans 1-22 (MNLACVLIVAVLFLTASQLATA). Positions 23–52 (ASYARDKQEYPAVRSSDEMQDSEDLTLTKE) are excised as a propeptide. 3 disulfides stabilise this stretch: C53/C68, C60/C72, and C67/C81.

Expressed by the venom duct.

Its subcellular location is the secreted. Functionally, may act as a neurotoxin, but produces no obvious effect on ionic currents when tested on the mouse dorsal rooted ganglia (DRG). The chain is Conotoxin VxVIB from Conus vexillum (Flag cone).